The following is a 241-amino-acid chain: Small ribosomal subunit protein uS3 (241 aa).

The 69-residue stretch at 39–107 (IRKYLEKELK…ETHLNIVEVR (69 aa)) folds into the KH type-2 domain. A disordered region spans residues 214–241 (ASERRATEGDAAHGGGGDRERGRRRENA).

It belongs to the universal ribosomal protein uS3 family. In terms of assembly, part of the 30S ribosomal subunit. Forms a tight complex with proteins S10 and S14.

Functionally, binds the lower part of the 30S subunit head. Binds mRNA in the 70S ribosome, positioning it for translation. The sequence is that of Small ribosomal subunit protein uS3 from Mesorhizobium japonicum (strain LMG 29417 / CECT 9101 / MAFF 303099) (Mesorhizobium loti (strain MAFF 303099)).